A 119-amino-acid polypeptide reads, in one-letter code: Large ribosomal subunit protein uL22 (119 aa).

This sequence belongs to the universal ribosomal protein uL22 family. In terms of assembly, part of the 50S ribosomal subunit.

In terms of biological role, this protein binds specifically to 23S rRNA; its binding is stimulated by other ribosomal proteins, e.g. L4, L17, and L20. It is important during the early stages of 50S assembly. It makes multiple contacts with different domains of the 23S rRNA in the assembled 50S subunit and ribosome. Functionally, the globular domain of the protein is located near the polypeptide exit tunnel on the outside of the subunit, while an extended beta-hairpin is found that lines the wall of the exit tunnel in the center of the 70S ribosome. The chain is Large ribosomal subunit protein uL22 from Chlorobium phaeobacteroides (strain DSM 266 / SMG 266 / 2430).